A 213-amino-acid polypeptide reads, in one-letter code: RPW8-like protein 3 (213 aa).

The RPW8 domain occupies 1-153; the sequence is MPVSEIMAGA…ITRQPTDCIC (153 aa). The helical transmembrane segment at 7–23 threads the bilayer; the sequence is MAGAALGLALQVLHDAI. 2 coiled-coil regions span residues 70 to 93 and 125 to 147; these read EDLK…RRRN and VDIK…ITRQ. A glycan (N-linked (GlcNAc...) asparagine) is linked at Asn157.

It belongs to the plant RPW8 protein family.

The protein localises to the membrane. Functionally, probable disease resistance (R) protein. In Arabidopsis thaliana (Mouse-ear cress), this protein is RPW8-like protein 3.